A 505-amino-acid chain; its full sequence is Maturase K (505 aa).

It belongs to the intron maturase 2 family. MatK subfamily.

It is found in the plastid. Its subcellular location is the chloroplast. Functionally, usually encoded in the trnK tRNA gene intron. Probably assists in splicing its own and other chloroplast group II introns. This is Maturase K from Rhizophora stylosa (Bakau).